Here is a 140-residue protein sequence, read N- to C-terminus: PDZ domain-containing protein 11 (140 aa).

The PDZ domain maps to isoleucine 47 to tyrosine 129.

As to quaternary structure, interacts with ATP2B1, ATP2B2, ATP2B3, ATP2B4 and ATP7A. Interacts with PLEKHA7 (via WW domains) at zonula adherens; this interaction is essential for the interaction between PLEKHA7 and the ADAM10-binding protein TSPAN33. Interacts with SLC5A6.

Its subcellular location is the cytoplasm. The protein resides in the cell junction. It is found in the adherens junction. The protein localises to the cell membrane. Its function is as follows. Mediates docking of ADAM10 to zonula adherens by interacting with PLEKHA7 which is required for PLEKHA7 to interact with the ADAM10-binding protein TSPAN33. The chain is PDZ domain-containing protein 11 (PDZD11) from Bos taurus (Bovine).